Here is a 153-residue protein sequence, read N- to C-terminus: Transcriptional repressor NrdR (153 aa).

A zinc finger spans residues 3–34; sequence CPSCFHNGTRVLDSRPVDEGRSIRRRRECESC. The region spanning 49–139 is the ATP-cone domain; that stretch reads LIVVKKEGTR…VYRQFKDLNV (91 aa).

This sequence belongs to the NrdR family. The cofactor is Zn(2+).

In terms of biological role, negatively regulates transcription of bacterial ribonucleotide reductase nrd genes and operons by binding to NrdR-boxes. The protein is Transcriptional repressor NrdR of Bacillus cytotoxicus (strain DSM 22905 / CIP 110041 / 391-98 / NVH 391-98).